A 276-amino-acid polypeptide reads, in one-letter code: UPF0761 membrane protein APL_1950 (276 aa).

Transmembrane regions (helical) follow at residues Thr33 to Phe53, Met90 to Asp110, Ile125 to Gly145, Ile147 to Phe167, Leu171 to Val191, Leu203 to Ile223, and Leu239 to Ile259.

Belongs to the UPF0761 family.

It localises to the cell inner membrane. This chain is UPF0761 membrane protein APL_1950, found in Actinobacillus pleuropneumoniae serotype 5b (strain L20).